Reading from the N-terminus, the 308-residue chain is tRNA dimethylallyltransferase (308 aa).

19–26 contributes to the ATP binding site; sequence GPTASGKS. 21 to 26 contributes to the substrate binding site; that stretch reads TASGKS. Residues 44–47 are interaction with substrate tRNA; it reads DSMQ.

Belongs to the IPP transferase family. Monomer. Mg(2+) is required as a cofactor.

It catalyses the reaction adenosine(37) in tRNA + dimethylallyl diphosphate = N(6)-dimethylallyladenosine(37) in tRNA + diphosphate. Functionally, catalyzes the transfer of a dimethylallyl group onto the adenine at position 37 in tRNAs that read codons beginning with uridine, leading to the formation of N6-(dimethylallyl)adenosine (i(6)A). The protein is tRNA dimethylallyltransferase of Methylobacterium radiotolerans (strain ATCC 27329 / DSM 1819 / JCM 2831 / NBRC 15690 / NCIMB 10815 / 0-1).